Reading from the N-terminus, the 242-residue chain is DNA repair protein RecO (242 aa).

It belongs to the RecO family. As to quaternary structure, monomer.

Its function is as follows. Involved in DNA repair and RecF pathway recombination. This is DNA repair protein RecO from Salmonella agona (strain SL483).